A 296-amino-acid chain; its full sequence is Small ribosomal subunit protein uS2 (296 aa).

A disordered region spans residues 246-272 (QAKDGSVVDSGKGKSIAAHKGGGKASK).

This sequence belongs to the universal ribosomal protein uS2 family.

The chain is Small ribosomal subunit protein uS2 from Anaplasma phagocytophilum (strain HZ).